Reading from the N-terminus, the 154-residue chain is 3-dehydroquinate dehydratase 2 (154 aa).

Tyrosine 23 (proton acceptor) is an active-site residue. Residues asparagine 79, histidine 85, and aspartate 92 each contribute to the substrate site. The Proton donor role is filled by histidine 105. Substrate-binding positions include 106-107 (IS) and arginine 116.

Belongs to the type-II 3-dehydroquinase family. In terms of assembly, homododecamer.

The enzyme catalyses 3-dehydroquinate = 3-dehydroshikimate + H2O. Its pathway is metabolic intermediate biosynthesis; chorismate biosynthesis; chorismate from D-erythrose 4-phosphate and phosphoenolpyruvate: step 3/7. In terms of biological role, catalyzes a trans-dehydration via an enolate intermediate. The chain is 3-dehydroquinate dehydratase 2 (aroQ2) from Ralstonia nicotianae (strain ATCC BAA-1114 / GMI1000) (Ralstonia solanacearum).